The sequence spans 194 residues: Probable calcium-binding protein CML45 (194 aa).

Residues 52–63 show a composition bias toward basic and acidic residues; sequence NNKDQQETLTKQ. The segment at 52 to 81 is disordered; that stretch reads NNKDQQETLTKQEDDDDDDDDDDDDDDDDI. The span at 64 to 81 shows a compositional bias: acidic residues; that stretch reads EDDDDDDDDDDDDDDDDI. 3 EF-hand domains span residues 76–98, 122–157, and 160–194; these read DDDD…LGLF, ASLE…LGFK, and SYLD…TSFY. 9 residues coordinate Ca(2+): aspartate 135, asparagine 137, aspartate 139, glutamate 146, aspartate 173, asparagine 175, aspartate 177, lysine 179, and glutamate 184.

Its function is as follows. Potential calcium sensor. This chain is Probable calcium-binding protein CML45, found in Arabidopsis thaliana (Mouse-ear cress).